The primary structure comprises 382 residues: GDSL esterase/lipase At4g01130 (382 aa).

Positions 1–28 (MASDINRRRSFSLLVLIIVMLYGHKGDS) are cleaved as a signal peptide. The Nucleophile role is filled by Ser-41. N-linked (GlcNAc...) asparagine glycans are attached at residues Asn-118, Asn-263, Asn-275, and Asn-330. Active-site residues include Asp-348 and His-351.

The protein belongs to the 'GDSL' lipolytic enzyme family.

It localises to the secreted. This Arabidopsis thaliana (Mouse-ear cress) protein is GDSL esterase/lipase At4g01130.